We begin with the raw amino-acid sequence, 1091 residues long: Error-prone DNA polymerase 1 (1091 aa).

Positions 1051-1064 (RGDEFHHGMPDDHR) are enriched in basic and acidic residues. The tract at residues 1051-1080 (RGDEFHHGMPDDHRAIRKRPPPSNHDDDEV) is disordered.

It belongs to the DNA polymerase type-C family. DnaE2 subfamily.

Its subcellular location is the cytoplasm. The enzyme catalyses DNA(n) + a 2'-deoxyribonucleoside 5'-triphosphate = DNA(n+1) + diphosphate. Functionally, DNA polymerase involved in damage-induced mutagenesis and translesion synthesis (TLS). It is not the major replicative DNA polymerase. The chain is Error-prone DNA polymerase 1 from Agrobacterium fabrum (strain C58 / ATCC 33970) (Agrobacterium tumefaciens (strain C58)).